The primary structure comprises 179 residues: Inner membrane-spanning protein YciB (179 aa).

6 helical membrane-spanning segments follow: residues 3 to 23 (FLFD…ADIY), 24 to 44 (TATA…WFRH), 49 to 69 (PMQW…LVLH), 76 to 96 (WKPT…VIGW), 121 to 141 (AAWA…AYQF), and 149 to 169 (FKLF…SVWL).

Belongs to the YciB family.

The protein localises to the cell inner membrane. In terms of biological role, plays a role in cell envelope biogenesis, maintenance of cell envelope integrity and membrane homeostasis. The chain is Inner membrane-spanning protein YciB from Cupriavidus necator (strain ATCC 17699 / DSM 428 / KCTC 22496 / NCIMB 10442 / H16 / Stanier 337) (Ralstonia eutropha).